Here is a 428-residue protein sequence, read N- to C-terminus: Tyrosine--tRNA ligase (428 aa).

Residue Tyr41 coordinates L-tyrosine. The 'HIGH' region signature appears at 46 to 55 (PTADSLHLGH). 2 residues coordinate L-tyrosine: Tyr179 and Gln183. Positions 239 to 243 (KFGKT) match the 'KMSKS' region motif. Lys242 serves as a coordination point for ATP. Residues 361-418 (ADLMQALVDSELQPSRGQARKTIASNAITINGEKQSDPEYTFSDSDRLFGRYTLLRRG) enclose the S4 RNA-binding domain.

The protein belongs to the class-I aminoacyl-tRNA synthetase family. TyrS type 1 subfamily. In terms of assembly, homodimer.

Its subcellular location is the cytoplasm. It catalyses the reaction tRNA(Tyr) + L-tyrosine + ATP = L-tyrosyl-tRNA(Tyr) + AMP + diphosphate + H(+). Its function is as follows. Catalyzes the attachment of tyrosine to tRNA(Tyr) in a two-step reaction: tyrosine is first activated by ATP to form Tyr-AMP and then transferred to the acceptor end of tRNA(Tyr). This is Tyrosine--tRNA ligase from Cronobacter sakazakii (strain ATCC BAA-894) (Enterobacter sakazakii).